The sequence spans 261 residues: X-box-binding protein 1 (261 aa).

At 1–185 the chain is on the cytoplasmic side; it reads MVVVAAAPNP…VQAQLSPLQN (185 aa). Residues 44–93 are disordered; it reads RGASPEAASGGLPQARKRQRLTHLSPEEKALRRKLKNRVAAQTARDRKKA. A phosphoserine mark is found at S47 and S68. Positions 70–133 constitute a bZIP domain; that stretch reads EEKALRRKLK…HGLVVENQEL (64 aa). The segment at 72–94 is basic motif; the sequence is KALRRKLKNRVAAQTARDRKKAR. Positions 75–92 are nuclear localization signal (NLS); in isoforms 1 and isoform 2; sequence RRKLKNRVAAQTARDRKK. Residues 98 to 133 are leucine-zipper; sequence LEQQVVDLEEENQKLLLENQLLREKTHGLVVENQEL. A helical; Signal-anchor for type II membrane protein transmembrane segment spans residues 186–203; that stretch reads ISPWILAVLTLQIQSLIS. Residues 204-261 are Lumenal-facing; it reads CWAFWTTWTQSCSSNALPQSLPAWRSSQRSTQKDPVPYQPPFLCQWGRHQPSWKPLMN. The tract at residues 235-261 is necessary for the translational pausing of its own mRNA; the sequence is QKDPVPYQPPFLCQWGRHQPSWKPLMN.

Belongs to the bZIP family. Isoform 2 interacts with SIRT1. Isoform 2 interacts with PIK3R1 and PIK3R2; the interactions are direct and induce translocation of XBP1 isoform 2 into the nucleus and the unfolded protein response (UPR) XBP1-dependent target genes activation in a ER stress- and/or insulin-dependent but PI3K-independent manner. Isoform 2 interacts with FOXO1; the interaction is direct and leads to FOXO1 ubiquitination and degradation via the proteasome pathway in hepatocytes. Isoform 1 interacts with HM13. Isoform 1 interacts with RNF139; the interaction induces ubiquitination and degradation of isoform 1. Isoform 1 interacts (via luminal domain) with DERL1; the interaction obviates the need for ectodomain shedding prior HM13/SPP-mediated XBP1 isoform 1 cleavage. Isoform 1 interacts with isoform 2; the interaction sequesters isoform 2 from the nucleus and enhances isoform 2 degradation in the cytoplasm. Isoform 1 interacts with HDAC3 and AKT1; the interactions occur in endothelial cell (EC) under disturbed flow. Isoform 1 interacts with the oncoprotein FOS. Isoform 2 interacts with ATF6; the interaction occurs in a ER stress-dependent manner and is required for DNA binding to the unfolded protein response element (UPRE). Isoform 2 interacts with PIK3R1; the interaction is direct and induces translocation of XBP1 isoform 2 into the nucleus and the unfolded protein response (UPR) XBP1-dependent target genes activation in a ER stress- and/or insulin-dependent but PI3K-independent manner. Post-translationally, acetylated by EP300; acetylation positively regulates the transcriptional activity of XBP1 isoform 2. Isoform 2 is deacetylated by SIRT1; deacetylation negatively regulates the transcriptional activity of XBP1 isoform 2. In terms of processing, ubiquitinated, leading to proteasome-mediated degradation in response to ER stress. X-box-binding protein 1, cytoplasmic form and luminal form are produced by intramembrane proteolytic cleavage of ER membrane-anchored isoform 1 triggered by HM13/SPP in a DERL1-RNF139-dependent and VCP/p97-independent manner. X-box-binding protein 1, luminal form is ubiquitinated leading to proteasomal degradation. In terms of tissue distribution, expressed in plasma cells in rheumatoid synovium. Over-expressed in primary breast cancer and metastatic breast cancer cells. Isoform 1 and isoform 2 are expressed at higher level in proliferating as compared to confluent quiescent endothelial cells.

The protein localises to the endoplasmic reticulum. Its subcellular location is the nucleus. It is found in the cytoplasm. It localises to the endoplasmic reticulum membrane. The protein resides in the membrane. Functionally, functions as a transcription factor during endoplasmic reticulum (ER) stress by regulating the unfolded protein response (UPR). Required for cardiac myogenesis and hepatogenesis during embryonic development, and the development of secretory tissues such as exocrine pancreas and salivary gland. Involved in terminal differentiation of B lymphocytes to plasma cells and production of immunoglobulins. Modulates the cellular response to ER stress in a PIK3R-dependent manner. Binds to the cis-acting X box present in the promoter regions of major histocompatibility complex class II genes. Involved in VEGF-induced endothelial cell (EC) proliferation and retinal blood vessel formation during embryonic development but also for angiogenesis in adult tissues under ischemic conditions. Also functions as a major regulator of the UPR in obesity-induced insulin resistance and type 2 diabetes for the management of obesity and diabetes prevention. Plays a role in the unconventional cytoplasmic splicing processing of its own mRNA triggered by the endoplasmic reticulum (ER) transmembrane endoribonuclease ERN1: upon ER stress, the emerging XBP1 polypeptide chain, as part of a mRNA-ribosome-nascent chain (R-RNC) complex, cotranslationally recruits its own unprocessed mRNA through transient docking to the ER membrane and translational pausing, therefore facilitating efficient IRE1-mediated XBP1 mRNA isoform 2 production. In endothelial cells (EC), associated with KDR, promotes IRE1-mediated XBP1 mRNA isoform 2 productions in a vascular endothelial growth factor (VEGF)-dependent manner, leading to EC proliferation and angiogenesis. Functions as a negative feed-back regulator of the potent transcription factor XBP1 isoform 2 protein levels through proteasome-mediated degradation, thus preventing the constitutive activation of the ER stress response signaling pathway. Inhibits the transactivation activity of XBP1 isoform 2 in myeloma cells. Acts as a weak transcriptional factor. Together with HDAC3, contributes to the activation of NFE2L2-mediated HMOX1 transcription factor gene expression in a PI(3)K/mTORC2/Akt-dependent signaling pathway leading to EC survival under disturbed flow/oxidative stress. Binds to the ER stress response element (ERSE) upon ER stress. Binds to the consensus 5'-GATGACGTG[TG]N(3)[AT]T-3' sequence related to cAMP responsive element (CRE)-like sequences. Binds the Tax-responsive element (TRE) present in the long terminal repeat (LTR) of T-cell leukemia virus type 1 (HTLV-I) and to the TPA response elements (TRE). Associates preferentially to the HDAC3 gene promoter region in a static flow-dependent manner. Binds to the CDH5/VE-cadherin gene promoter region. Its function is as follows. Functions as a stress-inducible potent transcriptional activator during endoplasmic reticulum (ER) stress by inducing unfolded protein response (UPR) target genes via binding to the UPR element (UPRE). Up-regulates target genes encoding ER chaperones and ER-associated degradation (ERAD) components to enhance the capacity of productive folding and degradation mechanism, respectively, in order to maintain the homeostasis of the ER under ER stress. Plays a role in the production of immunoglobulins and interleukin-6 in the presence of stimuli required for plasma cell differentiation. Induces phospholipid biosynthesis and ER expansion. Contributes to the VEGF-induced endothelial cell (EC) growth and proliferation in a Akt/GSK-dependent and/or -independent signaling pathway, respectively, leading to beta-catenin nuclear translocation and E2F2 gene expression. Promotes umbilical vein EC apoptosis and atherosclerotisis development in a caspase-dependent signaling pathway, and contributes to VEGF-induced EC proliferation and angiogenesis in adult tissues under ischemic conditions. Involved in the regulation of endostatin-induced autophagy in EC through BECN1 transcriptional activation. Plays a role as an oncogene by promoting tumor progression: stimulates zinc finger protein SNAI1 transcription to induce epithelial-to-mesenchymal (EMT) transition, cell migration and invasion of breast cancer cells. Involved in adipocyte differentiation by regulating lipogenic gene expression during lactation. Plays a role in the survival of both dopaminergic neurons of the substantia nigra pars compacta (SNpc), by maintaining protein homeostasis and of myeloma cells. Increases insulin sensitivity in the liver as a response to a high carbohydrate diet, resulting in improved glucose tolerance. Also improves glucose homeostasis in an ER stress- and/or insulin-independent manner through both binding and proteasome-induced degradation of the transcription factor FOXO1, hence resulting in suppression of gluconeogenic genes expression and in a reduction of blood glucose levels. Controls the induction of de novo fatty acid synthesis in hepatocytes by regulating the expression of a subset of lipogenic genes in an ER stress- and UPR-independent manner. Associates preferentially to the HDAC3 gene promoter region in a disturbed flow-dependent manner. Binds to the BECN1 gene promoter region. Binds to the CDH5/VE-cadherin gene promoter region. Binds to the ER stress response element (ERSE) upon ER stress. Binds to the 5'-CCACG-3' motif in the PPARG promoter. The chain is X-box-binding protein 1 from Homo sapiens (Human).